Reading from the N-terminus, the 885-residue chain is Chitobiase (885 aa).

The N-terminal stretch at 1-27 (MNAFKLSALARLTATMGFLGGMGSAMA) is a signal peptide. 3 disulfides stabilise this stretch: Cys-56/Cys-66, Cys-400/Cys-408, and Cys-505/Cys-578. The Proton donor role is filled by Glu-540. Residues 866 to 885 (EVQVRSVSPDGKRYSRAEKV) are disordered. Basic and acidic residues predominate over residues 875-885 (DGKRYSRAEKV).

This sequence belongs to the glycosyl hydrolase 20 family. Monomer.

The protein localises to the periplasm. The enzyme catalyses Hydrolysis of terminal non-reducing N-acetyl-D-hexosamine residues in N-acetyl-beta-D-hexosaminides.. It functions in the pathway glycan degradation; chitin degradation. Its function is as follows. Digests the beta-1,4-glycosidic bonds in N-acetylglucosamine (GlcNAc) oligomers (mainly dimers). The protein is Chitobiase (chb) of Serratia marcescens.